The chain runs to 963 residues: VPS35 endosomal protein-sorting factor-like (963 aa).

The disordered stretch occupies residues 43–112 (SKTKKVSRKG…DKDENSFVGP (70 aa)). Over residues 51–72 (KGSTSSTSSSSSSSVIDPLSSV) the composition is skewed to low complexity. S265 bears the Phosphoserine mark. The chain crosses the membrane as a helical span at residues 699-719 (AFVRACVAYCFITIPSLVGIF).

It belongs to the VPS35L family. As to quaternary structure, component of the heterotrimeric retriever complex formed by VPS26C, VPS29 and VPS35L. Interacts with VPS29. Interacts with COMMD1, CCDC93 and CCDC22; associates with the CCC (COMMD/CCDC22/CCDC93) complex which contains at least COMMD1 (and possibly other COMM domain-containing proteins), CCDC22 and CCDC93. Interacts with WASHC1, WASHC2A and WASHC2C. Interacts with SNX17 and SNX31.

The protein resides in the membrane. The protein localises to the endosome. In terms of biological role, acts as a component of the retriever complex. The retriever complex is a heterotrimeric complex related to retromer cargo-selective complex (CSC) and essential for retromer-independent retrieval and recycling of numerous cargos such as integrin alpha-5/beta-1 (ITGA5:ITGB1). The recruitment of the retriever complex to the endosomal membrane involves CCC and WASH complexes. In the endosomes, drives the retrieval and recycling of NxxY-motif-containing cargo proteins by coupling to SNX17, a cargo essential for the homeostatic maintenance of numerous cell surface proteins associated with processes that include cell migration, cell adhesion, nutrient supply and cell signaling. Involved in copper-dependent ATP7A trafficking between the trans-Golgi network and vesicles in the cell periphery; the function is proposed to depend on its association with the CCC complex and cooperation with the WASH complex on early endosomes. Seems not to be required for CCC complex stability. This is VPS35 endosomal protein-sorting factor-like from Mus musculus (Mouse).